Reading from the N-terminus, the 223-residue chain is Adenylate kinase 4, mitochondrial (223 aa).

15-20 (GSGKGT) lines the a ribonucleoside 5'-triphosphate pocket. The NMP stretch occupies residues 35-64 (SSGHFLRENIKANTEVGDMAKQYIEKGLLV). AMP-binding residues include Ser36 and Arg41. Lys60 is modified (N6-succinyllysine). Residues 62-64 (LLV), 89-92 (GFPR), and Gln96 each bind AMP. The segment at 125–162 (RRWIHPPSGRVYNLDFNPPHVHGMDDVTGEPLVQQEDD) is LID. A ribonucleoside 5'-triphosphate-binding positions include Arg126 and 135-136 (VY). Arg170 lines the AMP pocket. Position 175 is an N6-acetyllysine (Lys175). An N6-acetyllysine; alternate mark is found at Lys179 and Lys186. 2 positions are modified to N6-succinyllysine; alternate: Lys179 and Lys186. A ribonucleoside 5'-triphosphate is bound at residue Thr199.

This sequence belongs to the adenylate kinase family. AK3 subfamily. In terms of assembly, monomer. Interacts with SLC25A5/ANT2.

It localises to the mitochondrion matrix. It catalyses the reaction a ribonucleoside 5'-phosphate + ATP = a ribonucleoside 5'-diphosphate + ADP. It carries out the reaction AMP + ATP = 2 ADP. The enzyme catalyses GTP + AMP = GDP + ADP. The catalysed reaction is CMP + ATP = CDP + ADP. It catalyses the reaction GTP + CMP = CDP + GDP. It carries out the reaction dAMP + ATP = dADP + ADP. The enzyme catalyses dCMP + ATP = dCDP + ADP. The catalysed reaction is a 2'-deoxyribonucleoside 5'-diphosphate + ATP = a 2'-deoxyribonucleoside 5'-triphosphate + ADP. It catalyses the reaction a ribonucleoside 5'-diphosphate + ATP = a ribonucleoside 5'-triphosphate + ADP. It carries out the reaction GDP + ATP = GTP + ADP. The enzyme catalyses CDP + GTP = CTP + GDP. The catalysed reaction is CDP + ATP = CTP + ADP. It catalyses the reaction UDP + ATP = UTP + ADP. It carries out the reaction GTP + UDP = UTP + GDP. The enzyme catalyses dADP + GTP = dATP + GDP. The catalysed reaction is dCDP + GTP = dCTP + GDP. It catalyses the reaction dCDP + ATP = dCTP + ADP. It carries out the reaction dGDP + ATP = dGTP + ADP. The enzyme catalyses dTDP + GTP = dTTP + GDP. The catalysed reaction is dTDP + ATP = dTTP + ADP. Broad-specificity mitochondrial nucleoside phosphate kinase involved in cellular nucleotide homeostasis by catalyzing nucleoside-phosphate interconversions. Similar to other adenylate kinases, preferentially catalyzes the phosphorylation of the nucleoside monophosphate AMP with ATP as phosphate donor to produce ADP. Phosphorylates only AMP when using GTP as phosphate donor. In vitro, can also catalyze the phosphorylation of CMP, dAMP and dCMP and use GTP as an alternate phosphate donor. Moreover, exhibits a diphosphate kinase activity, producing ATP, CTP, GTP, UTP, TTP, dATP, dCTP and dGTP from the corresponding diphosphate substrates with either ATP or GTP as phosphate donors. Plays a role in controlling cellular ATP levels by regulating phosphorylation and activation of the energy sensor protein kinase AMPK. Plays a protective role in the cellular response to oxidative stress. In Bos taurus (Bovine), this protein is Adenylate kinase 4, mitochondrial.